The sequence spans 217 residues: Ribonuclease HII (217 aa).

The RNase H type-2 domain occupies 12 to 201 (DLVAGVDEVG…VRTAHEARAA (190 aa)). Residues Asp-18, Glu-19, and Asp-110 each coordinate a divalent metal cation.

The protein belongs to the RNase HII family. The cofactor is Mn(2+). It depends on Mg(2+) as a cofactor.

It localises to the cytoplasm. It catalyses the reaction Endonucleolytic cleavage to 5'-phosphomonoester.. In terms of biological role, endonuclease that specifically degrades the RNA of RNA-DNA hybrids. This chain is Ribonuclease HII, found in Pseudomonas syringae pv. tomato (strain ATCC BAA-871 / DC3000).